The sequence spans 278 residues: Putative pyruvate, phosphate dikinase regulatory protein (278 aa).

Residue 149–156 (GVSRSSKT) coordinates ADP.

The protein belongs to the pyruvate, phosphate/water dikinase regulatory protein family. PDRP subfamily.

It catalyses the reaction N(tele)-phospho-L-histidyl/L-threonyl-[pyruvate, phosphate dikinase] + ADP = N(tele)-phospho-L-histidyl/O-phospho-L-threonyl-[pyruvate, phosphate dikinase] + AMP + H(+). The enzyme catalyses N(tele)-phospho-L-histidyl/O-phospho-L-threonyl-[pyruvate, phosphate dikinase] + phosphate + H(+) = N(tele)-phospho-L-histidyl/L-threonyl-[pyruvate, phosphate dikinase] + diphosphate. Bifunctional serine/threonine kinase and phosphorylase involved in the regulation of the pyruvate, phosphate dikinase (PPDK) by catalyzing its phosphorylation/dephosphorylation. This is Putative pyruvate, phosphate dikinase regulatory protein from Erythrobacter litoralis (strain HTCC2594).